The chain runs to 61 residues: Large ribosomal subunit protein uL30 (61 aa).

This sequence belongs to the universal ribosomal protein uL30 family. As to quaternary structure, part of the 50S ribosomal subunit.

The protein is Large ribosomal subunit protein uL30 of Mycolicibacterium gilvum (strain PYR-GCK) (Mycobacterium gilvum (strain PYR-GCK)).